Reading from the N-terminus, the 211-residue chain is MVDKDEEQIKQNVEEDLSSTVEQTGEENIEFPSAPNHPKQVLVTDEELKALKKEATEYKDKYLRLLADSENARKRLQKERQEISRYALENMVVDFLKPLDNLENALKFAQGMSDEVKNWAFGFQMILTQFKDVLASNGITALESQGTFFDPHLHEAIEMVETDSYAPGIIVEENVRGYKMGDRMIRPARVKVAKAISAIDPQDKSELNENN.

Residues 1-13 (MVDKDEEQIKQNV) show a composition bias toward basic and acidic residues. The tract at residues 1–38 (MVDKDEEQIKQNVEEDLSSTVEQTGEENIEFPSAPNHP) is disordered.

The protein belongs to the GrpE family. Homodimer.

The protein resides in the cytoplasm. Its function is as follows. Participates actively in the response to hyperosmotic and heat shock by preventing the aggregation of stress-denatured proteins, in association with DnaK and GrpE. It is the nucleotide exchange factor for DnaK and may function as a thermosensor. Unfolded proteins bind initially to DnaJ; upon interaction with the DnaJ-bound protein, DnaK hydrolyzes its bound ATP, resulting in the formation of a stable complex. GrpE releases ADP from DnaK; ATP binding to DnaK triggers the release of the substrate protein, thus completing the reaction cycle. Several rounds of ATP-dependent interactions between DnaJ, DnaK and GrpE are required for fully efficient folding. This chain is Protein GrpE, found in Protochlamydia amoebophila (strain UWE25).